Consider the following 76-residue polypeptide: Conotoxin Cal5a L1 (76 aa).

The N-terminal stretch at 1–22 (MRFYIGLMAALMLTSILRTDSA) is a signal peptide. The propeptide occupies 23 to 42 (SVDQTGAEGGLALIERVIRQ). Residue P50 is modified to 4-hydroxyproline. Position 58 is a 4-hydroxyproline; in form cal5a, and form cal5b (P58). Position 62 is a 4-hydroxyproline; in form cal5a, form cal5b, and form cal5c (P62). P64 carries the post-translational modification 4-hydroxyproline; in form cal5a, form cal5b, form cal5c, and form cal5d.

Contains 2 disulfide bonds that can be either 'C1-C3, C2-C4' or 'C1-C4, C2-C3', since these disulfide connectivities have been observed for conotoxins with cysteine framework V (for examples, see AC P0DQQ7 and AC P81755). Post-translationally, five different peptides have been described after total venom examination by HPLC-MS. Cal5a is the longest. Cal5b-Cal5e are identical in length but are differentially hydroxylated. It is possible that hydroxylation and proteolysis at position 53 are incomplete in some of these peptides. Expressed by the venom duct.

The protein resides in the secreted. Functionally, probable neurotoxin with unknown target. Possibly targets ion channels. In Californiconus californicus (California cone), this protein is Conotoxin Cal5a L1.